The primary structure comprises 218 residues: Uracil-DNA glycosylase (218 aa).

Residue Asp68 is the Proton acceptor of the active site.

This sequence belongs to the uracil-DNA glycosylase (UDG) superfamily. UNG family. In terms of assembly, homodimer. Interacts with protein OPG148. Component of the Uracil-DNA glycosylase(UDG)-OPG148-polymerase complex; OPG148 and UDG form a heterodimeric processivity factor that associates with OPG71 to form the processive polymerase holoenzyme.

The enzyme catalyses Hydrolyzes single-stranded DNA or mismatched double-stranded DNA and polynucleotides, releasing free uracil.. In terms of biological role, plays an essential role in viral replication as a component of the DNA polymerase processivity factor. Excises uracil residues from the DNA which can arise as a result of misincorporation of dUMP residues by DNA polymerase or due to deamination of cytosine. The chain is Uracil-DNA glycosylase (OPG116) from Homo sapiens (Human).